The primary structure comprises 727 residues: Procollagen-lysine,2-oxoglutarate 5-dioxygenase 1 (727 aa).

Residues 1 to 18 form the signal peptide; that stretch reads MRPLLLLALLGWLLLAEA. Residues N163, N197, and N538 are each glycosylated (N-linked (GlcNAc...) asparagine). A Fe2OG dioxygenase domain is found at 636–727; the sequence is QFDLAFVVRY…RYIAVSFVDP (92 aa). The Fe cation site is built by H656 and D658. The N-linked (GlcNAc...) asparagine glycan is linked to N686. H708 serves as a coordination point for Fe cation. R718 is an active-site residue.

As to quaternary structure, homodimer. Identified in a complex with P3H3 and P3H4. Fe(2+) serves as cofactor. L-ascorbate is required as a cofactor.

Its subcellular location is the rough endoplasmic reticulum membrane. It catalyses the reaction L-lysyl-[collagen] + 2-oxoglutarate + O2 = (5R)-5-hydroxy-L-lysyl-[collagen] + succinate + CO2. In terms of biological role, part of a complex composed of PLOD1, P3H3 and P3H4 that catalyzes hydroxylation of lysine residues in collagen alpha chains and is required for normal assembly and cross-linkling of collagen fibrils. Forms hydroxylysine residues in -Xaa-Lys-Gly- sequences in collagens. These hydroxylysines serve as sites of attachment for carbohydrate units and are essential for the stability of the intermolecular collagen cross-links. The protein is Procollagen-lysine,2-oxoglutarate 5-dioxygenase 1 (PLOD1) of Homo sapiens (Human).